Reading from the N-terminus, the 933-residue chain is Serine/threonine-protein kinase PknD (933 aa).

In terms of domain architecture, Protein kinase spans 4 to 291 (YDIIRMIGKG…ALKADIEQHL (288 aa)). ATP contacts are provided by residues 10–18 (IGKGGMGEV) and lysine 33. Aspartate 138 serves as the catalytic Proton acceptor.

This sequence belongs to the protein kinase superfamily. Ser/Thr protein kinase family. In terms of processing, autophosphorylated on serine and threonine residues.

The enzyme catalyses L-seryl-[protein] + ATP = O-phospho-L-seryl-[protein] + ADP + H(+). The catalysed reaction is L-threonyl-[protein] + ATP = O-phospho-L-threonyl-[protein] + ADP + H(+). In terms of biological role, together with the serine/threonine kinase Pkn1, may play a role in the specific interactions with host proteins during intracellular growth. The sequence is that of Serine/threonine-protein kinase PknD from Chlamydia abortus (strain DSM 27085 / S26/3) (Chlamydophila abortus).